Consider the following 99-residue polypeptide: Large ribosomal subunit protein eL36A (99 aa).

Belongs to the eukaryotic ribosomal protein eL36 family. As to quaternary structure, component of the large ribosomal subunit (LSU). Mature yeast ribosomes consist of a small (40S) and a large (60S) subunit. The 40S small subunit contains 1 molecule of ribosomal RNA (18S rRNA) and at least 33 different proteins. The large 60S subunit contains 3 rRNA molecules (25S, 5.8S and 5S rRNA) and at least 46 different proteins.

Its subcellular location is the cytoplasm. Functionally, component of the ribosome, a large ribonucleoprotein complex responsible for the synthesis of proteins in the cell. The small ribosomal subunit (SSU) binds messenger RNAs (mRNAs) and translates the encoded message by selecting cognate aminoacyl-transfer RNA (tRNA) molecules. The large subunit (LSU) contains the ribosomal catalytic site termed the peptidyl transferase center (PTC), which catalyzes the formation of peptide bonds, thereby polymerizing the amino acids delivered by tRNAs into a polypeptide chain. The nascent polypeptides leave the ribosome through a tunnel in the LSU and interact with protein factors that function in enzymatic processing, targeting, and the membrane insertion of nascent chains at the exit of the ribosomal tunnel. The chain is Large ribosomal subunit protein eL36A (rpl3601) from Schizosaccharomyces pombe (strain 972 / ATCC 24843) (Fission yeast).